Consider the following 288-residue polypeptide: MAGAKEIRSKIGSVKSTQKITKAMEMVAASKMRRSQDAMEASRPYAETMRKVIGHVANASLEYRHPYLDEREAKRVGYIIISTDRGLCGGLNINVFKKAVTDMQAWKEKGAEVELAVIGSKATAFFKHGGAKVAAQVSGLGDSPSLEDLIGSVSVMLEKYDEGELDRLYLVFNKFVNTMVQQPTIDQLLPLPKSDSKDMQREHSWDYIYEPEPQALLDALLVRYVESQVYQGVVENLACEQAARMVAMKAATDNATNLIDDLELVYNKARQAAITQELSEIVGGAAAV.

Belongs to the ATPase gamma chain family. In terms of assembly, F-type ATPases have 2 components, CF(1) - the catalytic core - and CF(0) - the membrane proton channel. CF(1) has five subunits: alpha(3), beta(3), gamma(1), delta(1), epsilon(1). CF(0) has three main subunits: a, b and c.

It is found in the cell inner membrane. Its function is as follows. Produces ATP from ADP in the presence of a proton gradient across the membrane. The gamma chain is believed to be important in regulating ATPase activity and the flow of protons through the CF(0) complex. This Vibrio vulnificus (strain CMCP6) protein is ATP synthase gamma chain.